Reading from the N-terminus, the 151-residue chain is Large ribosomal subunit protein bL9 (151 aa).

The protein belongs to the bacterial ribosomal protein bL9 family.

Functionally, binds to the 23S rRNA. The polypeptide is Large ribosomal subunit protein bL9 (Dehalococcoides mccartyi (strain ATCC BAA-2266 / KCTC 15142 / 195) (Dehalococcoides ethenogenes (strain 195))).